Reading from the N-terminus, the 337-residue chain is Anthranilate phosphoribosyltransferase (337 aa).

Residues G82, 85-86 (GD), T90, 92-95 (NIST), 110-118 (KHGGRSVSS), and S122 each bind 5-phospho-alpha-D-ribose 1-diphosphate. Anthranilate is bound at residue G82. S94 is a binding site for Mg(2+). Residue R168 participates in anthranilate binding. Mg(2+)-binding residues include D226 and E227.

The protein belongs to the anthranilate phosphoribosyltransferase family. In terms of assembly, homodimer. Mg(2+) is required as a cofactor.

The enzyme catalyses N-(5-phospho-beta-D-ribosyl)anthranilate + diphosphate = 5-phospho-alpha-D-ribose 1-diphosphate + anthranilate. Its pathway is amino-acid biosynthesis; L-tryptophan biosynthesis; L-tryptophan from chorismate: step 2/5. In terms of biological role, catalyzes the transfer of the phosphoribosyl group of 5-phosphorylribose-1-pyrophosphate (PRPP) to anthranilate to yield N-(5'-phosphoribosyl)-anthranilate (PRA). This chain is Anthranilate phosphoribosyltransferase, found in Francisella tularensis subsp. holarctica (strain OSU18).